Here is an 802-residue protein sequence, read N- to C-terminus: Phenylalanine--tRNA ligase beta subunit (802 aa).

The tRNA-binding domain occupies 40–155 (SASLKNVVVG…EHVETGVSAI (116 aa)). Residues 409 to 484 (KAVNKIETSL…RIYGYDEIPV (76 aa)) enclose the B5 domain. Residues Asp-462, Asp-468, Glu-471, and Glu-472 each contribute to the Mg(2+) site. One can recognise an FDX-ACB domain in the interval 709-802 (PRYPEMTRDL…LQAKLHAIIR (94 aa)).

The protein belongs to the phenylalanyl-tRNA synthetase beta subunit family. Type 1 subfamily. As to quaternary structure, tetramer of two alpha and two beta subunits. Requires Mg(2+) as cofactor.

Its subcellular location is the cytoplasm. The catalysed reaction is tRNA(Phe) + L-phenylalanine + ATP = L-phenylalanyl-tRNA(Phe) + AMP + diphosphate + H(+). This Listeria innocua serovar 6a (strain ATCC BAA-680 / CLIP 11262) protein is Phenylalanine--tRNA ligase beta subunit.